The sequence spans 260 residues: 4-hydroxy-tetrahydrodipicolinate reductase (260 aa).

NAD(+)-binding positions include 8-13, glutamate 35, 91-93, and 115-118; these read GAAGRM, GTT, and APNM. Histidine 148 acts as the Proton donor/acceptor in catalysis. Histidine 149 contacts (S)-2,3,4,5-tetrahydrodipicolinate. Lysine 152 serves as the catalytic Proton donor. 158-159 serves as a coordination point for (S)-2,3,4,5-tetrahydrodipicolinate; it reads GT.

The protein belongs to the DapB family.

It localises to the cytoplasm. It carries out the reaction (S)-2,3,4,5-tetrahydrodipicolinate + NAD(+) + H2O = (2S,4S)-4-hydroxy-2,3,4,5-tetrahydrodipicolinate + NADH + H(+). It catalyses the reaction (S)-2,3,4,5-tetrahydrodipicolinate + NADP(+) + H2O = (2S,4S)-4-hydroxy-2,3,4,5-tetrahydrodipicolinate + NADPH + H(+). Its pathway is amino-acid biosynthesis; L-lysine biosynthesis via DAP pathway; (S)-tetrahydrodipicolinate from L-aspartate: step 4/4. In terms of biological role, catalyzes the conversion of 4-hydroxy-tetrahydrodipicolinate (HTPA) to tetrahydrodipicolinate. The polypeptide is 4-hydroxy-tetrahydrodipicolinate reductase (Rubrobacter xylanophilus (strain DSM 9941 / JCM 11954 / NBRC 16129 / PRD-1)).